A 271-amino-acid polypeptide reads, in one-letter code: Phosphate import ATP-binding protein PstB 2 (271 aa).

The ABC transporter domain maps to methionine 25 to isoleucine 266. Glycine 57–serine 64 provides a ligand contact to ATP.

The protein belongs to the ABC transporter superfamily. Phosphate importer (TC 3.A.1.7) family. As to quaternary structure, the complex is composed of two ATP-binding proteins (PstB), two transmembrane proteins (PstC and PstA) and a solute-binding protein (PstS).

It localises to the cell membrane. The enzyme catalyses phosphate(out) + ATP + H2O = ADP + 2 phosphate(in) + H(+). In terms of biological role, part of the ABC transporter complex PstSACB involved in phosphate import. Responsible for energy coupling to the transport system. In Listeria monocytogenes serovar 1/2a (strain ATCC BAA-679 / EGD-e), this protein is Phosphate import ATP-binding protein PstB 2.